Consider the following 77-residue polypeptide: MRKQQKIHVKIGDNVKIITGFDKNKIGKVSKIDRNTGKIIVKGINFKFKHIKPNAENEVGEIKQFEAPIHHSNVKLN.

Belongs to the universal ribosomal protein uL24 family. In terms of assembly, part of the 50S ribosomal subunit.

It localises to the plastid. Its subcellular location is the chloroplast. One of two assembly initiator proteins, it binds directly to the 5'-end of the 23S rRNA, where it nucleates assembly of the 50S subunit. In Trieres chinensis (Marine centric diatom), this protein is Large ribosomal subunit protein uL24c (rpl24).